The sequence spans 549 residues: MDVVEVAGSWWAQEREDIIMKYEKGHRAGLPEDKGPKPFRSYNNNVDHLGIVHETELPPLTAREAKQIRREISRKSKWVDMLGDWEKYKSSRKLIDQAYKGMPMNIRGPMWSVLLNTEEMKLKNPGRYQIMKEKGKKSSEHIQRIDRDVSGTLRKHIFFRDRYGTKQRELLHILLAYEEYNPEVGYCRDLSHIAALFLLYLPEEDAFWALVQLLASERHSLQGFHSPNGGTVQGLQDQQEHVVATSQPKTMGHQDKKDLCGQCSPLGCLIRILIDGISLGLTLRLWDVYLVEGEQALMPITRIAFKVQQKRLTKTSRCGPWARFCNRFVDTWARDEDTVLKHLRASMKKLTRKKGDLPPPAKPEQGSSASRPVPASRGGKTLCKGDRQAPPGPPARFPRPIWSASPPRAPRSSTPCPGGAVREDTYPVGTQGVPSPALAQGGPQGSWRFLQWNSMPRLPTDLDVEGPWFRHYDFRQSCWVRAISQEDQLAPCWQAEHPAERVRSAFAAPSTDSDQGTPFRARDEQQCAPTSGPCLCGLHLESSQFPPGF.

The 193-residue stretch at 101 to 293 (GMPMNIRGPM…RLWDVYLVEG (193 aa)) folds into the Rab-GAP TBC domain. 2 S-palmitoyl cysteine lipidation sites follow: Cys318 and Cys325. The tract at residues 350 to 419 (LTRKKGDLPP…PRSSTPCPGG (70 aa)) is disordered. Positions 398–417 (PRPIWSASPPRAPRSSTPCP) are enriched in low complexity.

Ubiquitinated by a CUL7-based E3 ligase, which leads to proteasomal degradation. Post-translationally, palmitoylation is required for membrane localization and protects TBC1D3 from ubiquitination. As to expression, expressed in pancreas, thymus and testis.

It is found in the cell membrane. Its function is as follows. Acts as a GTPase activating protein for RAB5. Does not act on RAB4 or RAB11. The protein is TBC1 domain family member 3E of Homo sapiens (Human).